Consider the following 305-residue polypeptide: Major fimbrium anchoring subunit FimB (305 aa).

Residues 1–22 form the signal peptide; it reads MNDAKKYIVSVLILLVAGMFGG. The N-palmitoyl cysteine moiety is linked to residue cysteine 23. The S-diacylglycerol cysteine moiety is linked to residue cysteine 23.

It belongs to the bacteroidetes fimbrillin superfamily. FimB/Mfa2 family. In terms of assembly, fimB is not part of the fimbrium itself, but anchors the fimbrium in the outer membrane. Linear, head-to-tail oligomerization of fimbrial subunits mediates assembly of the fimbrium stalk, while the minor components FimC, FimD and FimE probably form the fimbrium tip. The anchoring subunit FimB limits fimbrium length and is important for solid fimbrium attachment to the outer membrane. In its absence, the major fimbriae become very long and are easily detached from the membrane.

The protein resides in the cell outer membrane. Functionally, anchoring subunit of the major fimbriae. Regulates fimbrial length. These filamentous pili are attached to the cell surface; they mediate biofilm formation, adhesion onto host cells and onto other bacteria that are part of the oral microbiome. Fimbriae of P.gingivalis are major virulence factors. This is Major fimbrium anchoring subunit FimB from Porphyromonas gingivalis (Bacteroides gingivalis).